A 363-amino-acid polypeptide reads, in one-letter code: Ribosomal RNA large subunit methyltransferase M (363 aa).

Residues Ser-194, 227 to 230 (CPGG), Asp-246, Asp-266, and Asp-284 contribute to the S-adenosyl-L-methionine site. Catalysis depends on Lys-313, which acts as the Proton acceptor.

The protein belongs to the class I-like SAM-binding methyltransferase superfamily. RNA methyltransferase RlmE family. RlmM subfamily. In terms of assembly, monomer.

It is found in the cytoplasm. The enzyme catalyses cytidine(2498) in 23S rRNA + S-adenosyl-L-methionine = 2'-O-methylcytidine(2498) in 23S rRNA + S-adenosyl-L-homocysteine + H(+). Catalyzes the 2'-O-methylation at nucleotide C2498 in 23S rRNA. This is Ribosomal RNA large subunit methyltransferase M from Haemophilus influenzae (strain PittGG).